The chain runs to 87 residues: Small ribosomal subunit protein uS17 (87 aa).

Belongs to the universal ribosomal protein uS17 family. As to quaternary structure, part of the 30S ribosomal subunit.

Its function is as follows. One of the primary rRNA binding proteins, it binds specifically to the 5'-end of 16S ribosomal RNA. The protein is Small ribosomal subunit protein uS17 of Chromobacterium violaceum (strain ATCC 12472 / DSM 30191 / JCM 1249 / CCUG 213 / NBRC 12614 / NCIMB 9131 / NCTC 9757 / MK).